The chain runs to 230 residues: Ribose-5-phosphate isomerase A (230 aa).

Residues 29-32 (SGST), 86-89 (DGAD), and 99-102 (KGGG) contribute to the substrate site. E108 (proton acceptor) is an active-site residue. K126 is a substrate binding site.

It belongs to the ribose 5-phosphate isomerase family. Homodimer.

The catalysed reaction is aldehydo-D-ribose 5-phosphate = D-ribulose 5-phosphate. It functions in the pathway carbohydrate degradation; pentose phosphate pathway; D-ribose 5-phosphate from D-ribulose 5-phosphate (non-oxidative stage): step 1/1. Catalyzes the reversible conversion of ribose-5-phosphate to ribulose 5-phosphate. In Desulfatibacillum aliphaticivorans, this protein is Ribose-5-phosphate isomerase A.